Reading from the N-terminus, the 320-residue chain is Homeobox-leucine zipper protein HOX25 (320 aa).

Positions 79–139 (AAARKRRLTA…NRRARWKTKQ (61 aa)) form a DNA-binding region, homeobox. The tract at residues 138 to 182 (KQLELDFDRLRAAHDELLAGRTALAADNESLRSQVILLTEKLQAN) is leucine-zipper. Disordered regions lie at residues 181-209 (ANGKSPSPSPAPAEQTAVPAAPESAKSFQ) and 249-282 (DSPESYFAGARSPPSSSEDDCGGAGSDDDYPSSS). The span at 265–278 (SEDDCGGAGSDDDY) shows a compositional bias: acidic residues.

Belongs to the HD-ZIP homeobox family. Class I subfamily. As to expression, expressed in roots, leaf sheaths and blades and panicles.

The protein localises to the nucleus. In terms of biological role, probable transcription factor. The protein is Homeobox-leucine zipper protein HOX25 (HOX25) of Oryza sativa subsp. japonica (Rice).